A 774-amino-acid chain; its full sequence is Shugoshin (774 aa).

A coiled-coil region spans residues 41 to 105 (SLRIRGLENE…AELSSLLASL (65 aa)). Disordered regions lie at residues 106-151 (GEPP…QEGR), 205-661 (SPSP…DAQL), and 676-774 (CASP…SMML). Residues 109 to 120 (PSKRRLSEERRY) are compositionally biased toward basic and acidic residues. Residues 214 to 224 (AEETETTEQVE) show a composition bias toward acidic residues. Over residues 297–318 (GDNQNEPNKATKLQQGKENGNE) the composition is skewed to polar residues. The span at 382 to 398 (KGKEKVDLPAPDKKSAV) shows a compositional bias: basic and acidic residues. A compositionally biased stretch (polar residues) spans 399–409 (EETQGNSTSAF). Composition is skewed to basic and acidic residues over residues 482–495 (NLRD…KELF) and 549–558 (FEKEKEKEPQ). Composition is skewed to polar residues over residues 595-604 (PSVQEQSTLN) and 640-651 (QSMSRSVPTIPT). Residues 706–722 (ASSAASTETTATASAKP) are compositionally biased toward low complexity. Acidic residues predominate over residues 743 to 754 (LAQEEEDEEDVG). Over residues 765-774 (RASRRRSMML) the composition is skewed to basic residues.

It belongs to the shugoshin family.

Its subcellular location is the nucleus. The protein resides in the chromosome. It is found in the centromere. Functionally, plays a central role in chromosome cohesion during cell division by preventing premature dissociation of cohesin complex from centromeres after prophase, when most of cohesin complex dissociates from chromosomes arms. This chain is Shugoshin (sgo-1), found in Neurospora crassa (strain ATCC 24698 / 74-OR23-1A / CBS 708.71 / DSM 1257 / FGSC 987).